We begin with the raw amino-acid sequence, 168 residues long: Transcriptional repressor NrdR (168 aa).

The tract at residues 1–21 (MQCPACRHTDSRVLESRSSES) is disordered. Residues 3–34 (CPACRHTDSRVLESRSSESGRSVRRRRECLSC) fold into a zinc finger. Positions 7–20 (RHTDSRVLESRSSE) are enriched in basic and acidic residues. The region spanning 49-139 (ISVIKRNGDR…VYRQFRGVRD (91 aa)) is the ATP-cone domain.

This sequence belongs to the NrdR family. Zn(2+) serves as cofactor.

Negatively regulates transcription of bacterial ribonucleotide reductase nrd genes and operons by binding to NrdR-boxes. This Synechococcus elongatus (strain ATCC 33912 / PCC 7942 / FACHB-805) (Anacystis nidulans R2) protein is Transcriptional repressor NrdR.